The primary structure comprises 1176 residues: Pesticidal crystal protein Cry1Ag (1176 aa).

It belongs to the delta endotoxin family.

In terms of biological role, promotes colloidosmotic lysis by binding to the midgut epithelial cells of many lepidopteran larvae. The chain is Pesticidal crystal protein Cry1Ag (cry1Ag) from Bacillus thuringiensis.